Reading from the N-terminus, the 122-residue chain is MPITKDEIIKALEEMKLNELNELVKAIEDHFGVVASVGVAAAAPAEATNAAPTEVSVVMTSVGQQKVAVIKVVKELTGVGLMDAKKIVDGTMPVTIKEHVKPEEAEEMKAKLVEAGASIDLK.

It belongs to the bacterial ribosomal protein bL12 family. Homodimer. Part of the ribosomal stalk of the 50S ribosomal subunit. Forms a multimeric L10(L12)X complex, where L10 forms an elongated spine to which 2 to 4 L12 dimers bind in a sequential fashion. Binds GTP-bound translation factors.

Its function is as follows. Forms part of the ribosomal stalk which helps the ribosome interact with GTP-bound translation factors. Is thus essential for accurate translation. In Mycoplasma mycoides subsp. mycoides SC (strain CCUG 32753 / NCTC 10114 / PG1), this protein is Large ribosomal subunit protein bL12.